Reading from the N-terminus, the 377-residue chain is 1-deoxy-D-xylulose 5-phosphate reductoisomerase (377 aa).

Positions 20, 21, 23, 46, and 115 each coordinate NADPH. Lysine 116 lines the 1-deoxy-D-xylulose 5-phosphate pocket. Glutamate 117 is a binding site for NADPH. Aspartate 141 provides a ligand contact to Mn(2+). 1-deoxy-D-xylulose 5-phosphate contacts are provided by serine 142, glutamate 143, serine 166, and histidine 189. Glutamate 143 contributes to the Mn(2+) binding site. Glycine 195 serves as a coordination point for NADPH. The 1-deoxy-D-xylulose 5-phosphate site is built by serine 202, asparagine 207, lysine 208, and glutamate 211. Glutamate 211 is a binding site for Mn(2+).

This sequence belongs to the DXR family. The cofactor is Mg(2+). Mn(2+) serves as cofactor.

The catalysed reaction is 2-C-methyl-D-erythritol 4-phosphate + NADP(+) = 1-deoxy-D-xylulose 5-phosphate + NADPH + H(+). It functions in the pathway isoprenoid biosynthesis; isopentenyl diphosphate biosynthesis via DXP pathway; isopentenyl diphosphate from 1-deoxy-D-xylulose 5-phosphate: step 1/6. Catalyzes the NADPH-dependent rearrangement and reduction of 1-deoxy-D-xylulose-5-phosphate (DXP) to 2-C-methyl-D-erythritol 4-phosphate (MEP). The polypeptide is 1-deoxy-D-xylulose 5-phosphate reductoisomerase (Malacoplasma penetrans (strain HF-2) (Mycoplasma penetrans)).